Consider the following 305-residue polypeptide: Oxygen-dependent coproporphyrinogen-III oxidase (305 aa).

Substrate is bound at residue Ser-98. The a divalent metal cation site is built by His-102 and His-112. The active-site Proton donor is His-112. 114-116 provides a ligand contact to substrate; sequence NVR. Residues His-151 and His-181 each contribute to the a divalent metal cation site. Residues 246-281 are important for dimerization; sequence YVEFNLVYDRGTLFGLQSGGRTESILMSMPPLARWE. 264-266 lines the substrate pocket; that stretch reads GGR.

This sequence belongs to the aerobic coproporphyrinogen-III oxidase family. Homodimer. A divalent metal cation serves as cofactor.

The protein resides in the cytoplasm. The enzyme catalyses coproporphyrinogen III + O2 + 2 H(+) = protoporphyrinogen IX + 2 CO2 + 2 H2O. It participates in porphyrin-containing compound metabolism; protoporphyrin-IX biosynthesis; protoporphyrinogen-IX from coproporphyrinogen-III (O2 route): step 1/1. Functionally, involved in the heme biosynthesis. Catalyzes the aerobic oxidative decarboxylation of propionate groups of rings A and B of coproporphyrinogen-III to yield the vinyl groups in protoporphyrinogen-IX. This Vibrio parahaemolyticus serotype O3:K6 (strain RIMD 2210633) protein is Oxygen-dependent coproporphyrinogen-III oxidase.